We begin with the raw amino-acid sequence, 114 residues long: U17-barytoxin-Tl1a (114 aa).

A signal peptide spans 1 to 20; that stretch reads MKTIIVFLSLLVLATKFGDA. The propeptide occupies 21–74; that stretch reads NEGVNQEQMKEVIQNEFREDFLNEMAPMSLLQQLEAIESTLLEKEADRNSRQKR. 3 cysteine pairs are disulfide-bonded: Cys-75-Cys-88, Cys-82-Cys-93, and Cys-87-Cys-108.

This sequence belongs to the neurotoxin 14 (magi-1) family. 03 (ICK-30-40) subfamily. In terms of tissue distribution, expressed by the venom gland.

It is found in the secreted. Functionally, ion channel inhibitor. This is U17-barytoxin-Tl1a from Trittame loki (Brush-footed trapdoor spider).